The sequence spans 464 residues: 3-isopropylmalate dehydratase large subunit (464 aa).

Positions 337, 397, and 400 each coordinate [4Fe-4S] cluster.

It belongs to the aconitase/IPM isomerase family. LeuC type 1 subfamily. In terms of assembly, heterodimer of LeuC and LeuD. The cofactor is [4Fe-4S] cluster.

It catalyses the reaction (2R,3S)-3-isopropylmalate = (2S)-2-isopropylmalate. It functions in the pathway amino-acid biosynthesis; L-leucine biosynthesis; L-leucine from 3-methyl-2-oxobutanoate: step 2/4. Functionally, catalyzes the isomerization between 2-isopropylmalate and 3-isopropylmalate, via the formation of 2-isopropylmaleate. The protein is 3-isopropylmalate dehydratase large subunit of Bacillus cereus (strain ATCC 14579 / DSM 31 / CCUG 7414 / JCM 2152 / NBRC 15305 / NCIMB 9373 / NCTC 2599 / NRRL B-3711).